A 310-amino-acid chain; its full sequence is MDKIFVEEAVAELHTLQDMLRWTVSRFNAAGLFYGHGTDNAWDEAVQLVLPTLYLPIDVPAHVRESRLTSTERLRIVERVVRRINERIPTAYLTNKAWFCGLEFFVDERVLVPRSPIAELIETQFEPWLTEEPTRIMDLCTGSGCIAIACAHAFPNAEVDAIDISTDALMVAEQNVQDHGMEQQVFPIRSDLLRDIPKDQYNFIVSNPPYVDEEDMNSLPEEFEHEPELGLAAGTDGLKLVRRILANAPDYLMDNGFLICEVGNSMVHMMEQYPDIPFTWIEFAEGGHGVFMLTKQQLLDCADEFALYRD.

The protein belongs to the protein N5-glutamine methyltransferase family. PrmB subfamily.

It carries out the reaction L-glutaminyl-[ribosomal protein uL3] + S-adenosyl-L-methionine = N(5)-methyl-L-glutaminyl-[ribosomal protein uL3] + S-adenosyl-L-homocysteine + H(+). In terms of biological role, methylates large ribosomal subunit protein uL3 on a specific glutamine residue. The polypeptide is Ribosomal protein uL3 glutamine methyltransferase (Aliivibrio fischeri (strain ATCC 700601 / ES114) (Vibrio fischeri)).